Consider the following 358-residue polypeptide: Homoserine O-acetyltransferase (358 aa).

Positions 41-343 (NAVLICHALT…DYGHDAFLVD (303 aa)) constitute an AB hydrolase-1 domain. S143 (nucleophile) is an active-site residue. R212 is a binding site for substrate. Residues D304 and H337 contribute to the active site. A substrate-binding site is contributed by D338.

It belongs to the AB hydrolase superfamily. MetX family. Homodimer.

Its subcellular location is the cytoplasm. The catalysed reaction is L-homoserine + acetyl-CoA = O-acetyl-L-homoserine + CoA. It participates in amino-acid biosynthesis; L-methionine biosynthesis via de novo pathway; O-acetyl-L-homoserine from L-homoserine: step 1/1. Functionally, transfers an acetyl group from acetyl-CoA to L-homoserine, forming acetyl-L-homoserine. The polypeptide is Homoserine O-acetyltransferase (Haemophilus influenzae (strain 86-028NP)).